A 388-amino-acid polypeptide reads, in one-letter code: Succinate--CoA ligase [ADP-forming] subunit beta (388 aa).

The ATP-grasp domain occupies Lys9–Glu244. ATP is bound by residues Lys46, Gly53 to Gly55, Glu99, Ala102, and Glu107. Asn199 and Asp213 together coordinate Mg(2+). Substrate is bound by residues Asn264 and Gly321 to Met323.

The protein belongs to the succinate/malate CoA ligase beta subunit family. Heterotetramer of two alpha and two beta subunits. Requires Mg(2+) as cofactor.

The enzyme catalyses succinate + ATP + CoA = succinyl-CoA + ADP + phosphate. It catalyses the reaction GTP + succinate + CoA = succinyl-CoA + GDP + phosphate. It participates in carbohydrate metabolism; tricarboxylic acid cycle; succinate from succinyl-CoA (ligase route): step 1/1. In terms of biological role, succinyl-CoA synthetase functions in the citric acid cycle (TCA), coupling the hydrolysis of succinyl-CoA to the synthesis of either ATP or GTP and thus represents the only step of substrate-level phosphorylation in the TCA. The beta subunit provides nucleotide specificity of the enzyme and binds the substrate succinate, while the binding sites for coenzyme A and phosphate are found in the alpha subunit. The polypeptide is Succinate--CoA ligase [ADP-forming] subunit beta (Albidiferax ferrireducens (strain ATCC BAA-621 / DSM 15236 / T118) (Rhodoferax ferrireducens)).